Here is a 237-residue protein sequence, read N- to C-terminus: Probable aquaporin SIP2-1 (237 aa).

6 consecutive transmembrane segments (helical) span residues 15–35, 39–59, 71–91, 122–142, 169–189, and 202–222; these read FMWI…LGFS, PSGE…FAYL, LTAL…SVFV, VAIH…VLLS, ILGS…GWAY, and VYWL…KVVF. The NPA 1 signature appears at 69 to 71; that stretch reads NPL. An NPA 2 motif is present at residues 180-182; the sequence is NPA.

It belongs to the MIP/aquaporin (TC 1.A.8) family. SIP (TC 1.A.8.10) subfamily. In terms of tissue distribution, expressed in dividing cells and elongating regions of the root tips, emerging lateral roots, root steles, cotyledons, main veins of the rosette leaves, vascular tissues of the flower petals, stigma, stamens (anthers and filaments), pollen and the top and bottom (receptacle) of siliques.

It localises to the endoplasmic reticulum membrane. Its function is as follows. Water channel required to facilitate the transport of water across cell membrane. Inactive in yeast cells. This Arabidopsis thaliana (Mouse-ear cress) protein is Probable aquaporin SIP2-1 (SIP2-1).